Consider the following 203-residue polypeptide: Cytochrome c biogenesis CcmF N-terminal-like mitochondrial protein 2 (203 aa).

Transmembrane regions (helical) follow at residues 44-64 (IWIL…SWWA) and 143-163 (IFLW…FYQM).

Belongs to the CcmF/CycK/Ccl1/NrfE/CcsA family. In terms of assembly, interacts with CCMFC, CCMFN1, CCMH and CYTC-1.

It localises to the mitochondrion inner membrane. In terms of biological role, forms a complex with CCMFC, CCMFN1 and CCMH that performs the assembly of heme with c-type apocytochromes in mitochondria. In Arabidopsis thaliana (Mouse-ear cress), this protein is Cytochrome c biogenesis CcmF N-terminal-like mitochondrial protein 2.